The following is a 776-amino-acid chain: DExH-box ATP-dependent RNA helicase DExH18, mitochondrial (776 aa).

Residues 1–84 constitute a mitochondrion transit peptide; it reads MARGVAGVLR…RSFSSTVDNN (84 aa). The interval 80-101 is disordered; sequence TVDNNGENDDIEESVGSESDDY. Acidic residues predominate over residues 85-101; that stretch reads GENDDIEESVGSESDDY. A Helicase ATP-binding domain is found at 268-426; the sequence is FARAMKRKIV…RFKPLVVEAK (159 aa). 281–288 contacts ATP; the sequence is GPTNSGKT. The DEIH box; degenerate motif lies at 361–364; it reads DEIQ. Residues 427 to 595 enclose the Helicase C-terminal domain; the sequence is TLLGELKNVK…LFAAQVPDMA (169 aa).

The protein belongs to the DExH box helicase family. As to quaternary structure, homodimer; in free form. Component of the mitochondrial degradosome (mtEXO) complex which is a heteropentamer containing 2 copies of SUPV3L1 and 3 copies of PNPT1. The cofactor is Mg(2+). Mn(2+) is required as a cofactor.

It localises to the nucleus. The protein localises to the mitochondrion matrix. It is found in the mitochondrion nucleoid. The enzyme catalyses ATP + H2O = ADP + phosphate + H(+). Its function is as follows. Major helicase player in mitochondrial RNA metabolism. Component of the mitochondrial degradosome (mtEXO) complex, that degrades 3' overhang double-stranded RNA with a 3'-to-5' directionality in an ATP-dependent manner. ATPase and ATP-dependent multisubstrate helicase, able to unwind double-stranded (ds) DNA and RNA, and RNA/DNA heteroduplexes in the 5'-to-3' direction. Plays a role in the RNA surveillance system in mitochondria; regulates the stability of mature mRNAs, the removal of aberrantly formed mRNAs and the rapid degradation of non coding processing intermediates. The protein is DExH-box ATP-dependent RNA helicase DExH18, mitochondrial of Arabidopsis thaliana (Mouse-ear cress).